The chain runs to 479 residues: Aspartyl/glutamyl-tRNA(Asn/Gln) amidotransferase subunit B (479 aa).

It belongs to the GatB/GatE family. GatB subfamily. In terms of assembly, heterotrimer of A, B and C subunits.

The enzyme catalyses L-glutamyl-tRNA(Gln) + L-glutamine + ATP + H2O = L-glutaminyl-tRNA(Gln) + L-glutamate + ADP + phosphate + H(+). It carries out the reaction L-aspartyl-tRNA(Asn) + L-glutamine + ATP + H2O = L-asparaginyl-tRNA(Asn) + L-glutamate + ADP + phosphate + 2 H(+). Functionally, allows the formation of correctly charged Asn-tRNA(Asn) or Gln-tRNA(Gln) through the transamidation of misacylated Asp-tRNA(Asn) or Glu-tRNA(Gln) in organisms which lack either or both of asparaginyl-tRNA or glutaminyl-tRNA synthetases. The reaction takes place in the presence of glutamine and ATP through an activated phospho-Asp-tRNA(Asn) or phospho-Glu-tRNA(Gln). This Streptococcus equi subsp. zooepidemicus (strain MGCS10565) protein is Aspartyl/glutamyl-tRNA(Asn/Gln) amidotransferase subunit B.